The chain runs to 368 residues: Histidinol-phosphate aminotransferase (368 aa).

Lys-228 bears the N6-(pyridoxal phosphate)lysine mark.

The protein belongs to the class-II pyridoxal-phosphate-dependent aminotransferase family. Histidinol-phosphate aminotransferase subfamily. Requires pyridoxal 5'-phosphate as cofactor.

The catalysed reaction is L-histidinol phosphate + 2-oxoglutarate = 3-(imidazol-4-yl)-2-oxopropyl phosphate + L-glutamate. It participates in amino-acid biosynthesis; L-histidine biosynthesis; L-histidine from 5-phospho-alpha-D-ribose 1-diphosphate: step 7/9. The sequence is that of Histidinol-phosphate aminotransferase from Methanosarcina mazei (strain ATCC BAA-159 / DSM 3647 / Goe1 / Go1 / JCM 11833 / OCM 88) (Methanosarcina frisia).